Consider the following 49-residue polypeptide: Putative DNA-directed RNA polymerase subunit omega (49 aa).

The protein belongs to the RNA polymerase subunit omega family.

The protein localises to the plastid. It is found in the chloroplast. It catalyses the reaction RNA(n) + a ribonucleoside 5'-triphosphate = RNA(n+1) + diphosphate. In terms of biological role, may be involved in RNA polymerase activity. The chain is Putative DNA-directed RNA polymerase subunit omega (rpoZ) from Cyanidioschyzon merolae (strain NIES-3377 / 10D) (Unicellular red alga).